Consider the following 437-residue polypeptide: Nicotinate phosphoribosyltransferase (437 aa).

Position 231 is a phosphohistidine; by autocatalysis (histidine 231).

It belongs to the NAPRTase family. Transiently phosphorylated on a His residue during the reaction cycle. Phosphorylation strongly increases the affinity for substrates and increases the rate of nicotinate D-ribonucleotide production. Dephosphorylation regenerates the low-affinity form of the enzyme, leading to product release.

The catalysed reaction is nicotinate + 5-phospho-alpha-D-ribose 1-diphosphate + ATP + H2O = nicotinate beta-D-ribonucleotide + ADP + phosphate + diphosphate. The protein operates within cofactor biosynthesis; NAD(+) biosynthesis; nicotinate D-ribonucleotide from nicotinate: step 1/1. Functionally, catalyzes the synthesis of beta-nicotinate D-ribonucleotide from nicotinate and 5-phospho-D-ribose 1-phosphate at the expense of ATP. The protein is Nicotinate phosphoribosyltransferase of Vibrio vulnificus (strain YJ016).